Here is a 141-residue protein sequence, read N- to C-terminus: HTH-type transcriptional repressor NsrR (141 aa).

Positions 2–129 (QLTNFTDFGL…DQHTIQDMLT (128 aa)) constitute an HTH rrf2-type domain. Residues 28 to 51 (ITVVTETFDVSRNHMVKIINKLGQ) constitute a DNA-binding region (H-T-H motif). [2Fe-2S] cluster contacts are provided by C91, C96, and C102.

Requires [2Fe-2S] cluster as cofactor.

In terms of biological role, nitric oxide-sensitive repressor of genes involved in protecting the cell against nitrosative stress. May require iron for activity. In Aliivibrio salmonicida (strain LFI1238) (Vibrio salmonicida (strain LFI1238)), this protein is HTH-type transcriptional repressor NsrR.